The sequence spans 188 residues: MSTMFADTLLIVFISVCTALLAEGITWVLVYRTDKYKRLKAEVEKQSKKLEKKKETITESAGRQQKKKIERQEEKLKNNNRDLSMVRMKSMFAIGFCFTALMGMFNSIFDGRVVAKLPFTPLSYIQGLSHRNLLGDDTTDCSFIFLYILCTMSIRQNIQKILGLAPSRAATKQAGGFLGPPPPSGKFS.

Over 1–4 the chain is Lumenal; it reads MSTM. Residues 5–32 traverse the membrane as a helical segment; sequence FADTLLIVFISVCTALLAEGITWVLVYR. Positions 32–89 form a coiled coil; that stretch reads RTDKYKRLKAEVEKQSKKLEKKKETITESAGRQQKKKIERQEEKLKNNNRDLSMVRMK. Residues 33-86 lie on the Cytoplasmic side of the membrane; it reads TDKYKRLKAEVEKQSKKLEKKKETITESAGRQQKKKIERQEEKLKNNNRDLSMV. At Ser60 the chain carries Phosphoserine. A helical transmembrane segment spans residues 87–106; that stretch reads RMKSMFAIGFCFTALMGMFN. The Lumenal portion of the chain corresponds to 107-120; that stretch reads SIFDGRVVAKLPFT. Residues 121 to 130 lie within the membrane without spanning it; sequence PLSYIQGLSH. Residues 131–140 are Lumenal-facing; that stretch reads RNLLGDDTTD. The helical transmembrane segment at 141-162 threads the bilayer; sequence CSFIFLYILCTMSIRQNIQKIL. At 163–188 the chain is on the cytoplasmic side; sequence GLAPSRAATKQAGGFLGPPPPSGKFS. Position 188 is a phosphoserine (Ser188).

It belongs to the TMCO1 family. In terms of assembly, homodimer and homotetramer. Homodimer under resting conditions; forms homotetramers following ER calcium overload. Component of the GET- and EMC-like (GEL) complex, composed of RAB5IF/OPTI and TMCO1. The GEL complex is part of the multi-pass translocon (MPT) complex, composed of three subcomplexes, the GEL complex (composed of RAB5IF/OPTI and TMCO1), the BOS complex (composed of NCLN/Nicalin, NOMO1 and TMEM147) and the PAT complex (composed of WDR83OS/Asterix and CCDC47). The MPT complex associates with the SEC61 complex.

It localises to the endoplasmic reticulum membrane. The protein localises to the golgi apparatus membrane. Its subcellular location is the mitochondrion membrane. The enzyme catalyses Ca(2+)(in) = Ca(2+)(out). Functionally, endoplasmic reticulum (ER) calcium-selective channel preventing intracellular Ca2(+) stores from overfilling and maintaining calcium homeostasis in the ER. In response to endoplasmic reticulum (ER) Ca2(+) overloading, assembles into a homotetramer, forming a functional calcium-selective channel facilitating Ca2(+) release. Mediates ER Ca2(+) homeostasis in osteoblasts and plays a key role in bone formation, via the CaMKII-HDAC4-RUNX2 signaling axis. Component of the multi-pass translocon (MPT) complex that mediates insertion of multi-pass membrane proteins into the lipid bilayer of membranes. The MPT complex takes over after the SEC61 complex: following membrane insertion of the first few transmembrane segments of proteins by the SEC61 complex, the MPT complex occludes the lateral gate of the SEC61 complex to promote insertion of subsequent transmembrane regions. Within the MPT complex, the GEL subcomplex may mediate insertion of transmembrane regions into the membrane. The chain is Calcium load-activated calcium channel from Bos taurus (Bovine).